The sequence spans 234 residues: Endo-1,4-beta-xylanase 1 (234 aa).

Residues methionine 1–alanine 21 form the signal peptide. N-linked (GlcNAc...) asparagine glycosylation is found at asparagine 25 and asparagine 75. One can recognise a GH11 domain in the interval serine 38–alanine 234. Glutamate 124 (nucleophile) is an active-site residue. N-linked (GlcNAc...) asparagine glycosylation occurs at asparagine 167. The active-site Proton donor is the glutamate 221.

The protein belongs to the glycosyl hydrolase 11 (cellulase G) family.

It localises to the secreted. It catalyses the reaction Endohydrolysis of (1-&gt;4)-beta-D-xylosidic linkages in xylans.. It functions in the pathway glycan degradation; xylan degradation. Its function is as follows. Endo-1,4-beta-xylanase involved in the hydrolysis of xylan, a major structural heterogeneous polysaccharide found in plant biomass representing the second most abundant polysaccharide in the biosphere, after cellulose. The protein is Endo-1,4-beta-xylanase 1 (Xyn1) of Leucoagaricus gongylophorus (Leaf-cutting ant fungus).